Here is a 288-residue protein sequence, read N- to C-terminus: 4-hydroxybenzoate octaprenyltransferase (288 aa).

Helical transmembrane passes span 23–43 (IGSL…GRGI), 46–66 (AKIL…GCVV), 98–118 (ILFV…NSMT), 141–161 (LPQV…FAAV), 163–183 (ESLP…TVAY), 213–233 (LIIG…GWLM), 234–254 (NLGG…THQQ), and 268–288 (AFLN…ISYW).

It belongs to the UbiA prenyltransferase family. Mg(2+) serves as cofactor.

The protein resides in the cell inner membrane. It catalyses the reaction all-trans-octaprenyl diphosphate + 4-hydroxybenzoate = 4-hydroxy-3-(all-trans-octaprenyl)benzoate + diphosphate. The protein operates within cofactor biosynthesis; ubiquinone biosynthesis. In terms of biological role, catalyzes the prenylation of para-hydroxybenzoate (PHB) with an all-trans polyprenyl group. Mediates the second step in the final reaction sequence of ubiquinone-8 (UQ-8) biosynthesis, which is the condensation of the polyisoprenoid side chain with PHB, generating the first membrane-bound Q intermediate 3-octaprenyl-4-hydroxybenzoate. The chain is 4-hydroxybenzoate octaprenyltransferase from Yersinia pestis bv. Antiqua (strain Antiqua).